The following is a 386-amino-acid chain: Methionine aminopeptidase 1 (386 aa).

Alanine 2 is subject to N-acetylalanine. The segment at 6–59 adopts a C6H2-type zinc-finger fold; the sequence is TRVCETDGCSSEAKLQCPTCIKLGIQGSYFCSQECFKGSWATHKLLHKKAKDEK. 8 residues coordinate Zn(2+): cysteine 9, cysteine 14, cysteine 22, cysteine 25, cysteine 36, cysteine 40, histidine 48, and histidine 52. Histidine 203 serves as a coordination point for a protein. The Zn(2+) site is built by aspartate 220, aspartate 231, and histidine 294. Histidine 301 contributes to the a protein binding site. Residues glutamate 327 and glutamate 358 each coordinate Zn(2+).

It belongs to the peptidase M24A family. Methionine aminopeptidase type 1 subfamily. Associates with the 60S ribosomal subunit of the 80S translational complex. Zn(2+) is required as a cofactor. It depends on Co(2+) as a cofactor. Requires Mn(2+) as cofactor. The cofactor is Fe(2+).

The protein resides in the cytoplasm. The catalysed reaction is Release of N-terminal amino acids, preferentially methionine, from peptides and arylamides.. Cotranslationally removes the N-terminal methionine from nascent proteins. The N-terminal methionine is often cleaved when the second residue in the primary sequence is small and uncharged (Met-Ala-, Cys, Gly, Pro, Ser, Thr, or Val). The sequence is that of Methionine aminopeptidase 1 (METAP1) from Pongo abelii (Sumatran orangutan).